A 184-amino-acid chain; its full sequence is MSAERLVYVMGPSGAGKDSLLAYARKHVREPRIAFAHRYITRKSDGHENHVELTRDEFAARAQLGFFALEWSSHGFRYGVGVEIDAWLAAGSVVVVSGSRAHLPAALERYPQMCVVHIDAAPHVLAERLATRGRETADEIRARLARSVRWAVPDGVALTAIDNSGTLDDAGRVLVALLEGLARS.

ATP is bound at residue 11–18; it reads GPSGAGKD.

The protein belongs to the ribose 1,5-bisphosphokinase family.

The enzyme catalyses alpha-D-ribose 1,5-bisphosphate + ATP = 5-phospho-alpha-D-ribose 1-diphosphate + ADP. The protein operates within metabolic intermediate biosynthesis; 5-phospho-alpha-D-ribose 1-diphosphate biosynthesis; 5-phospho-alpha-D-ribose 1-diphosphate from D-ribose 5-phosphate (route II): step 3/3. In terms of biological role, catalyzes the phosphorylation of ribose 1,5-bisphosphate to 5-phospho-D-ribosyl alpha-1-diphosphate (PRPP). This Burkholderia pseudomallei (strain K96243) protein is Ribose 1,5-bisphosphate phosphokinase PhnN.